Reading from the N-terminus, the 218-residue chain is Adenylate kinase (218 aa).

ATP is bound at residue 10-15 (GAGKGT). An NMP region spans residues 30–59 (STGDMLRAAVKAGTPLGIAAKKIMDEGGLV). AMP is bound by residues Thr-31, Arg-36, 57-59 (GLV), 85-88 (GFPR), and Gln-92. The LID stretch occupies residues 122 to 159 (GRRVHPASGRTYHVKFNPPKVAGRDDVTGEELIQRDDD). ATP contacts are provided by residues Arg-123 and 132-133 (TY). Arg-156 and Arg-167 together coordinate AMP. Gly-203 contributes to the ATP binding site.

It belongs to the adenylate kinase family. Monomer.

Its subcellular location is the cytoplasm. The catalysed reaction is AMP + ATP = 2 ADP. It functions in the pathway purine metabolism; AMP biosynthesis via salvage pathway; AMP from ADP: step 1/1. Its function is as follows. Catalyzes the reversible transfer of the terminal phosphate group between ATP and AMP. Plays an important role in cellular energy homeostasis and in adenine nucleotide metabolism. In Herminiimonas arsenicoxydans, this protein is Adenylate kinase.